Reading from the N-terminus, the 311-residue chain is Mitochondrial ribosome-associated GTPase 1 (311 aa).

One can recognise a CP-type G domain in the interval 27-200; the sequence is AKGLKQMKTK…LFDTPGVLSP (174 aa). GTP-binding positions include 74 to 77, 144 to 149, and G196; these read NKMD and NVGKSS.

It belongs to the TRAFAC class YlqF/YawG GTPase family. MTG1 subfamily.

The protein localises to the mitochondrion inner membrane. In terms of biological role, plays a role in the regulation of the mitochondrial ribosome assembly and of translational activity. Displays mitochondrial GTPase activity. The polypeptide is Mitochondrial ribosome-associated GTPase 1 (Xenopus tropicalis (Western clawed frog)).